A 248-amino-acid chain; its full sequence is tRNA (guanine-N(1)-)-methyltransferase (248 aa).

Residues Gly-114 and 134–139 each bind S-adenosyl-L-methionine; that span reads IGDYVL.

Belongs to the RNA methyltransferase TrmD family. In terms of assembly, homodimer.

It is found in the cytoplasm. The catalysed reaction is guanosine(37) in tRNA + S-adenosyl-L-methionine = N(1)-methylguanosine(37) in tRNA + S-adenosyl-L-homocysteine + H(+). Functionally, specifically methylates guanosine-37 in various tRNAs. This Blochmanniella floridana protein is tRNA (guanine-N(1)-)-methyltransferase.